The following is a 344-amino-acid chain: Protein RecA (344 aa).

Residue 65-72 (GPESSGKT) coordinates ATP.

It belongs to the RecA family.

It is found in the cytoplasm. Its function is as follows. Can catalyze the hydrolysis of ATP in the presence of single-stranded DNA, the ATP-dependent uptake of single-stranded DNA by duplex DNA, and the ATP-dependent hybridization of homologous single-stranded DNAs. It interacts with LexA causing its activation and leading to its autocatalytic cleavage. This is Protein RecA from Rubrobacter xylanophilus (strain DSM 9941 / JCM 11954 / NBRC 16129 / PRD-1).